A 39-amino-acid chain; its full sequence is Photosystem II reaction center protein J (39 aa).

A helical transmembrane segment spans residues 7 to 27; that stretch reads IPLWIVAVVAGMGVIAVVGIF.

It belongs to the PsbJ family. In terms of assembly, PSII is composed of 1 copy each of membrane proteins PsbA, PsbB, PsbC, PsbD, PsbE, PsbF, PsbH, PsbI, PsbJ, PsbK, PsbL, PsbM, PsbT, PsbX, PsbY, PsbZ, Psb30/Ycf12, peripheral proteins PsbO, CyanoQ (PsbQ), PsbU, PsbV and a large number of cofactors. It forms dimeric complexes.

Its subcellular location is the cellular thylakoid membrane. This protein is a component of the reaction center of photosystem II. Its function is as follows. One of the components of the core complex of photosystem II (PSII). PSII is a light-driven water:plastoquinone oxidoreductase that uses light energy to abstract electrons from H(2)O, generating O(2) and a proton gradient subsequently used for ATP formation. It consists of a core antenna complex that captures photons, and an electron transfer chain that converts photonic excitation into a charge separation. The polypeptide is Photosystem II reaction center protein J (Picosynechococcus sp. (strain ATCC 27264 / PCC 7002 / PR-6) (Agmenellum quadruplicatum)).